Here is a 342-residue protein sequence, read N- to C-terminus: MTIQEELEAVKQQFSCDVSLAHSSKDLFDVKVKYLGKKGIFRGFADQLRKYPIEQKATVGASINACKQYVEEVLLERGKAVLAKEEAEEFLKEKIDISLPGSEEAALGGKHVIKKVLDDVVDIFVRFGFCVREAPNIESEKNNFSLLNFEEDHPARQMQDTFYLDPTTVLRTHTSNVQSRELARNKPPVRIVAPGECFRNEDVSARSHVIFHQVEAFCVDKDISFSDLTSMLAGFYHIFFGRKVELRFRHSYFPFVEPGIEVDISCECHGAGCSLCKHAGWLEVAGAGMIHPNVLRKASIDPEEYSGYALGMGIERLAMLKYGISDIRLFSENDLRFLRQFS.

Glu-257 contacts Mg(2+).

The protein belongs to the class-II aminoacyl-tRNA synthetase family. Phe-tRNA synthetase alpha subunit type 1 subfamily. Tetramer of two alpha and two beta subunits. The cofactor is Mg(2+).

It is found in the cytoplasm. It carries out the reaction tRNA(Phe) + L-phenylalanine + ATP = L-phenylalanyl-tRNA(Phe) + AMP + diphosphate + H(+). This is Phenylalanine--tRNA ligase alpha subunit (pheS) from Chlamydia trachomatis serovar D (strain ATCC VR-885 / DSM 19411 / UW-3/Cx).